The primary structure comprises 310 residues: Deoxyribonuclease gamma (310 aa).

A signal peptide spans 1–25 (MSLHPASPRLASLLLFILALHDTLA). Residues 40–56 (KKENHEAMDIIVKIIKR) carry the Bipartite nuclear localization signal motif. Catalysis depends on residues glutamate 105 and histidine 160. Cysteine 199 and cysteine 236 are disulfide-bonded. The not required for free DNA-nuclease activity but required for activity towards liposome-coated DNA stretch occupies residues 289–310 (SRAFTNNRKSVSLKKRKKGNRS). The Nuclear localization signal motif lies at 301–307 (LKKRKKG).

Belongs to the DNase I family. It depends on Ca(2+) as a cofactor. Mg(2+) is required as a cofactor. In terms of processing, poly-ADP-ribosylated by PARP1. ADP-ribosylation negatively regulates enzymatic activity during apoptosis. Expressed at high levels in liver, spleen and testes. Expressed at lower levels in heart, lungs, skeletal muscle and kidney. Not expressed in brain. Predominantly expressed in macrophages; at protein level. Secreted by mononuclear phagocytes.

It is found in the nucleus. Its subcellular location is the endoplasmic reticulum. The protein resides in the secreted. Inhibited by zinc. Inhibited by heparin and proteolysis by plasmin. Has DNA hydrolytic activity. Is capable of both single- and double-stranded DNA cleavage, producing DNA fragments with 3'-OH ends. Can cleave chromatin to nucleosomal units and cleaves nucleosomal and liposome-coated DNA. Acts in internucleosomal DNA fragmentation (INDF) during apoptosis and necrosis. The role in apoptosis includes myogenic and neuronal differentiation, and BCR-mediated clonal deletion of self-reactive B cells. Is active on chromatin in apoptotic cell-derived membrane-coated microparticles and thus suppresses anti-DNA autoimmunity. Together with DNASE1, plays a key role in degrading neutrophil extracellular traps (NETs). NETs are mainly composed of DNA fibers and are released by neutrophils to bind pathogens during inflammation. Degradation of intravascular NETs by DNASE1 and DNASE1L3 is required to prevent formation of clots that obstruct blood vessels and cause organ damage following inflammation. This chain is Deoxyribonuclease gamma, found in Mus musculus (Mouse).